The primary structure comprises 199 residues: Fe/S biogenesis protein NfuA (199 aa).

Cys156 and Cys159 together coordinate [4Fe-4S] cluster.

This sequence belongs to the NfuA family. As to quaternary structure, homodimer. It depends on [4Fe-4S] cluster as a cofactor.

In terms of biological role, involved in iron-sulfur cluster biogenesis. Binds a 4Fe-4S cluster, can transfer this cluster to apoproteins, and thereby intervenes in the maturation of Fe/S proteins. Could also act as a scaffold/chaperone for damaged Fe/S proteins. The sequence is that of Fe/S biogenesis protein NfuA from Actinobacillus pleuropneumoniae serotype 5b (strain L20).